The following is a 257-amino-acid chain: Short-chain dehydrogenase reductase 3a (257 aa).

12–36 (IITGGASGIGAEAVRLFTDHGAKVV) is a binding site for NAD(+). Substrate is bound at residue serine 144. The active-site Proton acceptor is the tyrosine 157.

Belongs to the short-chain dehydrogenases/reductases (SDR) family. In terms of tissue distribution, highly expressed in the radicle tip, lateral root primordia and tips, and the area surrounding the cotyledon hydathode of young seedlings.

Confers resistance to the incompatible pathogenic bacteria P.syringae pv. tomato DC3000 in a PR1-dependent manner. Seems not involved in abscisic acid (ABA) biosynthesis. This Arabidopsis thaliana (Mouse-ear cress) protein is Short-chain dehydrogenase reductase 3a (SDR3a).